A 251-amino-acid polypeptide reads, in one-letter code: uncharacterized protein (251 aa).

NADP(+) is bound at residue 10 to 34 (ITGAGSGIGKKAAVMFAERGAKVAI). Ser-139 is a binding site for substrate. The Proton acceptor role is filled by Tyr-152.

The protein belongs to the short-chain dehydrogenases/reductases (SDR) family.

This is an uncharacterized protein from Thermotoga maritima (strain ATCC 43589 / DSM 3109 / JCM 10099 / NBRC 100826 / MSB8).